A 30-amino-acid chain; its full sequence is Cyclotide hyen-K (30 aa).

Residues 1-30 (GIPCGESCIFIPCITTVVGCSCSNKVCYDN) constitute a cross-link (cyclopeptide (Gly-Asn)). 3 disulfide bridges follow: Cys4–Cys20, Cys8–Cys22, and Cys13–Cys27.

In terms of processing, this is a cyclic peptide. Detected in seeds (at protein level).

Functionally, probably participates in a plant defense mechanism. The sequence is that of Cyclotide hyen-K from Pigea enneasperma (Spade flower).